Reading from the N-terminus, the 107-residue chain is Nitrogenase-stabilizing/protective protein NifW (107 aa).

This sequence belongs to the NifW family. Homotrimer; associates with NifD.

Its function is as follows. May protect the nitrogenase Fe-Mo protein from oxidative damage. This chain is Nitrogenase-stabilizing/protective protein NifW, found in Gloeothece citriformis (strain PCC 7424) (Cyanothece sp. (strain PCC 7424)).